An 840-amino-acid chain; its full sequence is MAAAVAMRSGSGSDGGGGGYDKAGMDSGKYVRYTPEQVEALERVYAECPKPSSSRRQQLLRDCPILANIEPKQIKVWFQNRRCRDKQRKEASRLQAVNRKLTAMNKLLMEENERLQKQVSQLVHENAYMKQQLQNPSLGNDTSCESNVTTPQNPLRDASNPSGLLTIAEETLTEFLSKATGTAVDWVPMPGMKPGPDSFGIVAVSHGCRGVAARACGLVNLEPTKIVEILKDRPSWFRDCRSLEVFTMFPAGNGGTIELVYMQMYAPTTLVPARDFWTLRYTTTMEDGSLVVCERSLSGSGGGPSTASAQQFVRAEMLPSGYLVRPCEGGGSIVHIVDHLDLEAWSVPEVLRPLYESSRVVAQKMTTAALRHIRQIAQETSGEVVYALGRQPAVLRTFSQRLSRGFNDAISGFNDDGWSVMGGDGIEDVIIACNAKKVRNTSTSANAFVTPGGVICAKASMLLQSVPPAVLVRFLREHRSEWADYNFDAYSASSLKTSSCSLPGLRPMRFSGSQIIMPLAHTVENEEILEVVRLEGQALTHDDGLMSRDIHLLQLCTGIDEKSMGSCFQLVSAPIDELFPDDAPLISSGFRVIPLDMKTDGTPAGRTLDLASSLEVGSTAQPTGDASMDDCNLRSVLTIAFQFPYEMHLQDSVATMARQYVRSIVSSVQRVSMAISPSRSGLNAGQKIISGFPEAPTLARWICQSYQFHLGVELLRQADDAGEALLKMLWDYEDAILCCSFKEKPVFTFANEMGLNMLETSLVALQDLSLDKIFDEAGRKALYNEIPKLMEQGYVYLPGGVCLSGMGRHVSFEQAVAWKVLGEDNNVHCLAFCFVNWSFV.

2 disordered regions span residues 1-26 (MAAAVAMRSGSGSDGGGGGYDKAGMD) and 135-160 (NPSLGNDTSCESNVTTPQNPLRDASN). Positions 12–21 (GSDGGGGGYD) are enriched in gly residues. Positions 26-89 (DSGKYVRYTP…NRRCRDKQRK (64 aa)) form a DNA-binding region, homeobox. Residues 86–135 (KQRKEASRLQAVNRKLTAMNKLLMEENERLQKQVSQLVHENAYMKQQLQN) adopt a coiled-coil conformation. One can recognise an START domain in the interval 157–385 (DASNPSGLLT…IAQETSGEVV (229 aa)).

Belongs to the HD-ZIP homeobox family. Class III subfamily. As to expression, expressed in seedlings, roots, stems, leaf sheaths and blades and panicles.

It localises to the nucleus. Functionally, probable transcription factor. The protein is Homeobox-leucine zipper protein HOX9 (HOX9) of Oryza sativa subsp. japonica (Rice).